The primary structure comprises 320 residues: dTDP-glucose 4,6-dehydratase (320 aa).

NAD(+)-binding positions include 11 to 12 (FI), 38 to 41 (DKLG), 64 to 65 (DI), 84 to 88 (FAAET), and Ser-103. Substrate is bound at residue Thr-88. Residue Thr-128 participates in substrate binding. The active-site Proton donor is the Asp-129. Residues Glu-130 and Tyr-152 each act as proton acceptor in the active site. 152-156 (YAASK) is a binding site for NAD(+). A substrate-binding site is contributed by Asn-181. Asn-182 is an NAD(+) binding site. Residues 191–192 (KM), 207–209 (PVY), Arg-216, Asn-251, and 274–278 (DRKGH) each bind substrate.

This sequence belongs to the NAD(P)-dependent epimerase/dehydratase family. dTDP-glucose dehydratase subfamily. Homodimer. The cofactor is NAD(+).

It carries out the reaction dTDP-alpha-D-glucose = dTDP-4-dehydro-6-deoxy-alpha-D-glucose + H2O. Probably involved in the biosynthesis of the acarviose moiety of the alpha-glucosidase inhibitor acarbose. Catalyzes the dehydration of dTDP-D-glucose to form dTDP-6-deoxy-D-xylo-4-hexulose via a three-step process involving oxidation, dehydration and reduction. The polypeptide is dTDP-glucose 4,6-dehydratase (Actinoplanes sp. (strain ATCC 31044 / CBS 674.73 / SE50/110)).